The sequence spans 743 residues: Cytosolic endo-beta-N-acetylglucosaminidase (743 aa).

N-acetylmethionine is present on M1. Over residues 1 to 11 the composition is skewed to low complexity; it reads MEAAAVTVTRS. A disordered region spans residues 1–55; sequence MEAAAVTVTRSATRRRRRQLQGLAAPEAGTQEEQEDQEPRPRRRRPGRSIKDEEE. At S66 the chain carries Phosphoserine. The BRCT domain maps to 291 to 383; sequence RVFFDSCDGF…DFFQNQDKFW (93 aa).

It belongs to the glycosyl hydrolase 85 family. Widely expressed. Expressed at higher level in thymus and spleen.

The protein resides in the cytoplasm. It localises to the cytosol. It carries out the reaction an N(4)-(oligosaccharide-(1-&gt;3)-[oligosaccharide-(1-&gt;6)]-beta-D-Man-(1-&gt;4)-beta-D-GlcNAc-(1-&gt;4)-alpha-D-GlcNAc)-L-asparaginyl-[protein] + H2O = an oligosaccharide-(1-&gt;3)-[oligosaccharide-(1-&gt;6)]-beta-D-Man-(1-&gt;4)-D-GlcNAc + N(4)-(N-acetyl-beta-D-glucosaminyl)-L-asparaginyl-[protein]. Endoglycosidase that releases N-glycans from glycoproteins by cleaving the beta-1,4-glycosidic bond in the N,N'-diacetylchitobiose core. Involved in the processing of free oligosaccharides in the cytosol. The protein is Cytosolic endo-beta-N-acetylglucosaminidase (ENGASE) of Homo sapiens (Human).